We begin with the raw amino-acid sequence, 660 residues long: Probable rhamnogalacturonate lyase B (660 aa).

An N-terminal signal peptide occupies residues 1–20; that stretch reads MRLSVSLGLASLWTAIGATA. Residues N22, N27, N109, N142, N238, N284, N432, N492, N532, N594, and N635 are each glycosylated (N-linked (GlcNAc...) asparagine).

The protein belongs to the polysaccharide lyase 4 family.

The protein resides in the secreted. The enzyme catalyses Endotype eliminative cleavage of L-alpha-rhamnopyranosyl-(1-&gt;4)-alpha-D-galactopyranosyluronic acid bonds of rhamnogalacturonan I domains in ramified hairy regions of pectin leaving L-rhamnopyranose at the reducing end and 4-deoxy-4,5-unsaturated D-galactopyranosyluronic acid at the non-reducing end.. Functionally, pectinolytic enzymes consist of four classes of enzymes: pectin lyase, polygalacturonase, pectin methylesterase and rhamnogalacturonase. Degrades the rhamnogalacturonan I (RG-I) backbone of pectin. The protein is Probable rhamnogalacturonate lyase B (rglB) of Aspergillus terreus (strain NIH 2624 / FGSC A1156).